The sequence spans 626 residues: Chaperone protein DnaK (626 aa).

Thr-175 carries the phosphothreonine; by autocatalysis modification. Disordered stretches follow at residues 469–488, 498–517, and 583–626; these read DKGT…GLPK, AEAH…TRNQ, and AQQG…KDNK. The segment covering 498–516 has biased composition (basic and acidic residues); it reads AEAHEAEDKKRKEDAETRN. A compositionally biased stretch (acidic residues) spans 609–626; that stretch reads SDDDVVDAEVVDDDKDNK.

It belongs to the heat shock protein 70 family.

Its function is as follows. Acts as a chaperone. The chain is Chaperone protein DnaK from Bifidobacterium adolescentis (strain ATCC 15703 / DSM 20083 / NCTC 11814 / E194a).